Here is a 456-residue protein sequence, read N- to C-terminus: IQ domain-containing protein IQM3 (456 aa).

Positions 46 to 75 constitute an IQ domain; that stretch reads TRLAAVKVQKVYRSYRTRRRLADSVVVAEE. Positions 315-358 are disordered; the sequence is SEDSDSYDDYVKSNGGSEPEPLKKEDTTFQAETETDENGNGTVG.

Expressed in roots, rosette and cauline leaves, flowers and siliques, and at lower levels in stems.

It localises to the cytoplasm. Its subcellular location is the nucleus. Its function is as follows. May be involved in biotic and abiotic stress responses. This is IQ domain-containing protein IQM3 from Arabidopsis thaliana (Mouse-ear cress).